The following is a 111-amino-acid chain: Large ribosomal subunit protein uL22 (111 aa).

This sequence belongs to the universal ribosomal protein uL22 family. In terms of assembly, part of the 50S ribosomal subunit.

Functionally, this protein binds specifically to 23S rRNA; its binding is stimulated by other ribosomal proteins, e.g. L4, L17, and L20. It is important during the early stages of 50S assembly. It makes multiple contacts with different domains of the 23S rRNA in the assembled 50S subunit and ribosome. The globular domain of the protein is located near the polypeptide exit tunnel on the outside of the subunit, while an extended beta-hairpin is found that lines the wall of the exit tunnel in the center of the 70S ribosome. The polypeptide is Large ribosomal subunit protein uL22 (Xanthomonas euvesicatoria pv. vesicatoria (strain 85-10) (Xanthomonas campestris pv. vesicatoria)).